The following is a 518-amino-acid chain: Bifunctional purine biosynthesis protein PurH (518 aa).

Positions 1–144 constitute an MGS-like domain; the sequence is MSKRALISVS…KNHAAVTVVC (144 aa).

Belongs to the PurH family.

It catalyses the reaction (6R)-10-formyltetrahydrofolate + 5-amino-1-(5-phospho-beta-D-ribosyl)imidazole-4-carboxamide = 5-formamido-1-(5-phospho-D-ribosyl)imidazole-4-carboxamide + (6S)-5,6,7,8-tetrahydrofolate. The catalysed reaction is IMP + H2O = 5-formamido-1-(5-phospho-D-ribosyl)imidazole-4-carboxamide. It participates in purine metabolism; IMP biosynthesis via de novo pathway; 5-formamido-1-(5-phospho-D-ribosyl)imidazole-4-carboxamide from 5-amino-1-(5-phospho-D-ribosyl)imidazole-4-carboxamide (10-formyl THF route): step 1/1. The protein operates within purine metabolism; IMP biosynthesis via de novo pathway; IMP from 5-formamido-1-(5-phospho-D-ribosyl)imidazole-4-carboxamide: step 1/1. The chain is Bifunctional purine biosynthesis protein PurH from Lactococcus lactis subsp. cremoris (strain MG1363).